The chain runs to 72 residues: Cytochrome b-c1 complex subunit 9 (72 aa).

The Mitochondrial matrix portion of the chain corresponds to 1 to 27; sequence MESAARRSGGGVLEGFYRLVMRRTPVY. The helical transmembrane segment at 28-53 threads the bilayer; it reads VTFVIAGALLGERAVDYGVKTLWEKN. At 54–72 the chain is on the mitochondrial intermembrane side; sequence NVGKRYEDISVLGQRPVDE.

The protein belongs to the UQCR10/QCR9 family. In terms of assembly, component of the ubiquinol-cytochrome c oxidoreductase (cytochrome b-c1 complex, complex III, CIII), a multisubunit enzyme composed of 3 respiratory subunits cytochrome b, cytochrome c1 and Rieske protein, 2 core protein subunits, and additional low-molecular weight protein subunits. The complex exists as an obligatory dimer and forms supercomplexes (SCs) in the inner mitochondrial membrane with cytochrome c oxidase (complex IV, CIV).

The protein localises to the mitochondrion inner membrane. Its function is as follows. Component of the ubiquinol-cytochrome c oxidoreductase, a multisubunit transmembrane complex that is part of the mitochondrial electron transport chain which drives oxidative phosphorylation. The respiratory chain contains 3 multisubunit complexes succinate dehydrogenase (complex II, CII), ubiquinol-cytochrome c oxidoreductase (cytochrome b-c1 complex, complex III, CIII) and cytochrome c oxidase (complex IV, CIV), that cooperate to transfer electrons derived from NADH and succinate to molecular oxygen, creating an electrochemical gradient over the inner membrane that drives transmembrane transport and the ATP synthase. The cytochrome b-c1 complex catalyzes electron transfer from ubiquinol to cytochrome c, linking this redox reaction to translocation of protons across the mitochondrial inner membrane, with protons being carried across the membrane as hydrogens on the quinol. In the process called Q cycle, 2 protons are consumed from the matrix, 4 protons are released into the intermembrane space and 2 electrons are passed to cytochrome c. In Solanum tuberosum (Potato), this protein is Cytochrome b-c1 complex subunit 9.